The following is a 339-amino-acid chain: tRNA-specific 2-thiouridylase MnmA (339 aa).

ATP is bound by residues 6–13 and Met-32; that span reads AMSGGVDS. The active-site Nucleophile is Cys-92. Cysteines 92 and 186 form a disulfide. Position 116 (Gly-116) interacts with ATP. The segment at 134 to 136 is interaction with tRNA; that stretch reads KDQ. The active-site Cysteine persulfide intermediate is Cys-186. The segment at 288-289 is interaction with tRNA; the sequence is RY.

This sequence belongs to the MnmA/TRMU family.

The protein localises to the cytoplasm. The enzyme catalyses S-sulfanyl-L-cysteinyl-[protein] + uridine(34) in tRNA + AH2 + ATP = 2-thiouridine(34) in tRNA + L-cysteinyl-[protein] + A + AMP + diphosphate + H(+). Its function is as follows. Catalyzes the 2-thiolation of uridine at the wobble position (U34) of tRNA, leading to the formation of s(2)U34. The sequence is that of tRNA-specific 2-thiouridylase MnmA from Campylobacter curvus (strain 525.92).